Here is a 507-residue protein sequence, read N- to C-terminus: RNA-binding protein Nova-1 (507 aa).

The disordered stretch occupies residues 1–44 (MMAAAPIQQNGTHTGVPIDLDPPDSRKRPLEAPPEAGSTKRTNT). A Bipartite nuclear localization signal motif is present at residues 27–43 (KRPLEAPPEAGSTKRTN). Residues 49–116 (QYFLKVLIPS…EALNAVHGFI (68 aa)) enclose the KH 1 domain. The interval 139 to 171 (QTTVNPDRIKQTLPSSPTTTKSSPSDPMTTSRA) is disordered. A compositionally biased stretch (low complexity) spans 150–169 (TLPSSPTTTKSSPSDPMTTS). S154 carries the phosphoserine modification. KH domains follow at residues 171 to 237 (ANQV…VELI) and 421 to 488 (KDVV…QYLI). Residues 419–503 (GSKDVVEIAV…YEQGVRAANP (85 aa)) form a required for RNA binding region.

In terms of assembly, interacts with PTBP2; the interaction is direct. Expressed in neurons of the cortex, sub-cortex, cerebellum and brainstem (at protein level). Expressed in motor neurons, but not in glia.

The protein localises to the nucleus. In terms of biological role, functions to regulate alternative splicing in neurons by binding pre-mRNA in a sequence-specific manner to activate exon inclusion or exclusion. It binds specifically to the sequences 5'-YCAY-3' and regulates splicing in only a subset of regulated exons. Binding to an exonic 5'-YCAY-3' cluster changes the protein complexes assembled on pre-mRNA, blocking U1 snRNP binding and exon inclusion, whereas binding to an intronic 5'-YCAY-3' cluster enhances spliceosome assembly and exon inclusion. Binding to 5'-YCAY-3' clusters results in a local and asymmetric action to regulate spliceosome assembly and alternative splicing in neurons. Binding to an exonic 5'-YCAY-3' cluster changed the protein complexes assembled on pre-mRNA, blocking U1 snRNP (small nuclear ribonucleoprotein) binding and exon inclusion, whereas binding to an intronic 5'-YCAY-3' cluster enhanced spliceosome assembly and exon inclusion. With NOVA1, they perform unique biological functions in different brain areas and cell types. Autoregulates its own expression by acting as a splicing repressor. Acts to activate the inclusion of exon E3A in the glycine receptor alpha-2 chain and of exon E9 in gamma-aminobutyric-acid receptor gamma-2 subunit via a distal downstream UCAU-rich intronic splicing enhancer. Acts to regulate a novel glycine receptor alpha-2 chain splice variant (alpha-2N) in developing spinal cord. This is RNA-binding protein Nova-1 from Mus musculus (Mouse).